Here is a 299-residue protein sequence, read N- to C-terminus: ATP phosphoribosyltransferase (299 aa).

This sequence belongs to the ATP phosphoribosyltransferase family. Long subfamily. In terms of assembly, equilibrium between an active dimeric form, an inactive hexameric form and higher aggregates. Interconversion between the various forms is largely reversible and is influenced by the natural substrates and inhibitors of the enzyme. Mg(2+) is required as a cofactor.

It localises to the cytoplasm. The enzyme catalyses 1-(5-phospho-beta-D-ribosyl)-ATP + diphosphate = 5-phospho-alpha-D-ribose 1-diphosphate + ATP. It functions in the pathway amino-acid biosynthesis; L-histidine biosynthesis; L-histidine from 5-phospho-alpha-D-ribose 1-diphosphate: step 1/9. Feedback inhibited by histidine. Catalyzes the condensation of ATP and 5-phosphoribose 1-diphosphate to form N'-(5'-phosphoribosyl)-ATP (PR-ATP). Has a crucial role in the pathway because the rate of histidine biosynthesis seems to be controlled primarily by regulation of HisG enzymatic activity. The protein is ATP phosphoribosyltransferase of Shigella flexneri serotype 5b (strain 8401).